A 74-amino-acid polypeptide reads, in one-letter code: U2-sicaritoxin-Sdo1a (74 aa).

Residues 1-20 form the signal peptide; it reads MKLSFCFFLCAIVLFSFAEA. Positions 21-39 are excised as a propeptide; the sequence is RINPNQLKRLRELVRDDEP. Cystine bridges form between Cys-42/Cys-59, Cys-49/Cys-62, and Cys-58/Cys-71.

Expressed by the venom gland.

Its subcellular location is the secreted. This Hexophthalma dolichocephala (Afrotropical spider) protein is U2-sicaritoxin-Sdo1a.